The following is a 430-amino-acid chain: S-adenosylmethionine synthase (430 aa).

His-14 lines the ATP pocket. Residue Asp-16 coordinates Mg(2+). Glu-42 is a binding site for K(+). 2 residues coordinate L-methionine: Glu-55 and Gln-98. The flexible loop stretch occupies residues 98–108; sequence QSADINRGVER. Residues 164–166, 254–255, Asp-263, 269–270, Ala-286, and Lys-290 each bind ATP; these read DAK, KF, and RK. Asp-263 contacts L-methionine. L-methionine is bound at residue Lys-294.

It belongs to the AdoMet synthase family. In terms of assembly, homotetramer; dimer of dimers. Requires Mg(2+) as cofactor. K(+) is required as a cofactor.

The protein resides in the cytoplasm. It carries out the reaction L-methionine + ATP + H2O = S-adenosyl-L-methionine + phosphate + diphosphate. Its pathway is amino-acid biosynthesis; S-adenosyl-L-methionine biosynthesis; S-adenosyl-L-methionine from L-methionine: step 1/1. Its function is as follows. Catalyzes the formation of S-adenosylmethionine (AdoMet) from methionine and ATP. The overall synthetic reaction is composed of two sequential steps, AdoMet formation and the subsequent tripolyphosphate hydrolysis which occurs prior to release of AdoMet from the enzyme. In Bacteroides fragilis (strain ATCC 25285 / DSM 2151 / CCUG 4856 / JCM 11019 / LMG 10263 / NCTC 9343 / Onslow / VPI 2553 / EN-2), this protein is S-adenosylmethionine synthase.